We begin with the raw amino-acid sequence, 309 residues long: MNLMDITKIFSLLQPDKEEEDTDTEEKQALNQAVYDNDSYTLDQLLRQERYKRFINSRSGWGVPGTPLRLAASYGHLSCLQVLLAHGADVDSLDVKAQTPLFTAVSHGHLDCVRVLLEAGASPGGSIYNNCSPVLTAARDGAVAILQELLDHGAEANVKAKLPVWASNIASCSGPLYLAAVYGHLDCFRLLLLHGADPDYNCTDQGLLARVPRPRTLLEICLHHNCEPEYIQLLIDFGANIYLPSLSLDLTSQDDKGIALLLQARATPRSLLSQVRLVVRRALCQAGQPQAINQLDIPPMLISYLKHQL.

ANK repeat units follow at residues 63-92 (VPGTPLRLAASYGHLSCLQVLLAHGADVDS), 96-125 (KAQTPLFTAVSHGHLDCVRVLLEAGASPGG), 129-158 (NNCSPVLTAARDGAVAILQELLDHGAEANV), 171-200 (SCSGPLYLAAVYGHLDCFRLLLLHGADPDY), and 213-243 (RPRTLLEICLHHNCEPEYIQLLIDFGANIYL). The SOCS box domain maps to 268–308 (PRSLLSQVRLVVRRALCQAGQPQAINQLDIPPMLISYLKHQ).

This sequence belongs to the ankyrin SOCS box (ASB) family. As to quaternary structure, interacts with CUL5 and RNF7.

Its pathway is protein modification; protein ubiquitination. Its function is as follows. Probable substrate-recognition component of a SCF-like ECS (Elongin-Cullin-SOCS-box protein) E3 ubiquitin-protein ligase complex which mediates the ubiquitination and subsequent proteasomal degradation of target proteins. This is Ankyrin repeat and SOCS box protein 12 (ASB12) from Homo sapiens (Human).